The following is a 93-amino-acid chain: Protein IDA-LIKE 4 (93 aa).

A signal peptide spans 1–35; the sequence is MYPTRPHYWRRRLSINRPQAFLLLILCLFFIHHCD.

Expressed in mainly in buds. Lower levels in roots. Detected at the base of pedicel, in the floral and funicule abscission zones, in vascular tissues, in guard cells of young seedlings and in hydathodes.

The protein localises to the secreted. It is found in the extracellular space. Its function is as follows. May be involved in floral abscission. This is Protein IDA-LIKE 4 (IDL4) from Arabidopsis thaliana (Mouse-ear cress).